A 430-amino-acid chain; its full sequence is Potassium channel subfamily K member 12 (430 aa).

Residues 1 to 38 (MSSRSPRPPPRRCRRRLPRPSCCCCCCRRSHLNEDTGR) lie on the Cytoplasmic side of the membrane. The segment at 11 to 16 (RRCRRR) is ER retention/retrieval signal. Residues 39 to 59 (FVLLAALIGLYLVAGATVFSA) traverse the membrane as a helical segment. N-linked (GlcNAc...) asparagine glycosylation occurs at asparagine 78. Positions 114 to 134 (WDFPGAFYFVGTVVSTIGFGM) form an intramembrane region, pore-forming. Residues threonine 129, isoleucine 130, and glycine 131 each coordinate K(+). The tract at residues 129 to 134 (TIGFGM) is selectivity filter 1. A helical membrane pass occupies residues 145–165 (FLIAYGLFGCAGTILFFNLFL). Over 166 to 212 (ERIISLLAFIMRACRERQLRRSGLLPATFRRGSALSEADSLAGWKPS) the chain is Cytoplasmic. A helical membrane pass occupies residues 213–233 (VYHVLLILGLFAVLLACCASA). The pore-forming intramembrane region spans 243–263 (YVDSLYFCFVTFSTIGFGDLV). K(+) is bound by residues threonine 256, isoleucine 257, glycine 258, and phenylalanine 259. A selectivity filter 2 region spans residues 256–261 (TIGFGD). Residues 282 to 302 (LFILLGVCCIYSLFNVISILI) traverse the membrane as a helical segment. The Cytoplasmic portion of the chain corresponds to 303–430 (KQVLNWMLRK…NRLAETSASR (128 aa)).

It belongs to the two pore domain potassium channel (TC 1.A.1.8) family. Homodimer. Heterodimer with KCNK13. In terms of tissue distribution, highly expressed in most brain regions. Also expressed in other tissues such as lung, kidney, liver, stomach and spleen.

The protein localises to the cell membrane. The protein resides in the endoplasmic reticulum membrane. It catalyses the reaction K(+)(in) = K(+)(out). K(+) channel subunit that may homo- and heterodimerize to form functional channels with distinct regulatory and gating properties. Can heterodimerize with KCNK13 subunit to conduct K(+) outward rectifying currents at the plasma membrane. The homodimers are mainly retained in the endoplasmic reticulum compartment and may be targeted to the cell surface upon phosphorylation or other activation signals yet to be elucidated. The sequence is that of Potassium channel subfamily K member 12 (Kcnk12) from Rattus norvegicus (Rat).